Here is a 405-residue protein sequence, read N- to C-terminus: Envelope glycoprotein G (405 aa).

Positions 1–19 (MLAVGATLCLLSFLTGATG) are cleaved as a signal peptide. 5 N-linked (GlcNAc...) asparagine; by host glycosylation sites follow: Asn83, Asn138, Asn174, Asn221, and Asn288. Residues 389–405 (LKTVYICLALIGLAHVP) form a helical membrane-spanning segment.

This sequence belongs to the alphaherpesvirinae glycoprotein G family.

The protein localises to the virion membrane. In terms of biological role, chemokine-binding protein that inhibits neutrophils' chemotaxis. This is Envelope glycoprotein G (gG) from Equine herpesvirus 4 (strain 1942) (EHV-4).